The primary structure comprises 222 residues: Alpha-S2-casein (222 aa).

The N-terminal stretch at 1 to 15 (MKFFIFTCLLAVALA) is a signal peptide. 13 positions are modified to phosphoserine: serine 23, serine 24, serine 25, serine 28, serine 46, serine 71, serine 72, serine 73, serine 76, serine 144, serine 146, serine 150, and serine 158. The segment at residues 76-140 (SAEVATEEVK…AVPITPTLNR (65 aa)) is a repeat. The stretch at residues 158 to 222 (STEVFTKKTK…TKVIPYVRYL (65 aa)) is a repeat.

This sequence belongs to the alpha-casein family. Mammary gland specific. Secreted in milk.

The protein resides in the secreted. In terms of biological role, important role in the capacity of milk to transport calcium phosphate. Its function is as follows. Casocidin-I inhibits the growth of E.coli and S.carnosus. The chain is Alpha-S2-casein (CSN1S2) from Bos taurus (Bovine).